A 388-amino-acid chain; its full sequence is Chorismate synthase (388 aa).

Arginine 39 and arginine 45 together coordinate NADP(+). Residues arginine 130–serine 132, asparagine 251–alanine 252, glycine 296, lysine 311–threonine 315, and arginine 337 contribute to the FMN site.

It belongs to the chorismate synthase family. Homotetramer. FMNH2 is required as a cofactor.

It catalyses the reaction 5-O-(1-carboxyvinyl)-3-phosphoshikimate = chorismate + phosphate. It functions in the pathway metabolic intermediate biosynthesis; chorismate biosynthesis; chorismate from D-erythrose 4-phosphate and phosphoenolpyruvate: step 7/7. Functionally, catalyzes the anti-1,4-elimination of the C-3 phosphate and the C-6 proR hydrogen from 5-enolpyruvylshikimate-3-phosphate (EPSP) to yield chorismate, which is the branch point compound that serves as the starting substrate for the three terminal pathways of aromatic amino acid biosynthesis. This reaction introduces a second double bond into the aromatic ring system. The polypeptide is Chorismate synthase (Streptococcus agalactiae serotype Ia (strain ATCC 27591 / A909 / CDC SS700)).